Here is a 676-residue protein sequence, read N- to C-terminus: Probable ERAD-associated E3 ubiquitin-protein ligase ASI1 (676 aa).

Residues 1–78 (MSTNILQHVK…TLQLAKVGIR (78 aa)) lie on the Perinuclear space side of the membrane. Residues N24, N34, N46, and N66 are each glycosylated (N-linked (GlcNAc...) asparagine). A helical membrane pass occupies residues 79–99 (MFFSYSVSKYAVLCFSTAIIL). The Nuclear segment spans residues 100 to 126 (NRLTVMSSLRSNSTNIRLPLWSKTLLH). A helical transmembrane segment spans residues 127-147 (LVATLSLVKALLQILSQFGLM). Residues 148-156 (HELHVSDTD) are Perinuclear space-facing. The helical transmembrane segment at 157–177 (FYALSVYLFVALSDCIEIFIS) threads the bilayer. The Nuclear segment spans residues 178–181 (STTN). The helical transmembrane segment at 182–202 (VPSLICSDFSIWGLSLNLYII) threads the bilayer. The Perinuclear space portion of the chain corresponds to 203-277 (SKMPAGQQHI…NICLIHNYFP (75 aa)). Residues 278-298 (GFFYISTILLASIGIFLKALF) form a helical membrane-spanning segment. Topologically, residues 299–676 (TSNPFRSLYS…VKGYSKLNIV (378 aa)) are nuclear. Residues 624–664 (CLICKVNKRNIVTWPCRCLALCDDCRISLGYKGFATCVSCD) form an RING-type; atypical zinc finger.

Component of the Asi complex, which contains ASI1, ASI2 and ASI3. Interacts directly with ASI1.

The protein resides in the nucleus inner membrane. The catalysed reaction is S-ubiquitinyl-[E2 ubiquitin-conjugating enzyme]-L-cysteine + [acceptor protein]-L-lysine = [E2 ubiquitin-conjugating enzyme]-L-cysteine + N(6)-ubiquitinyl-[acceptor protein]-L-lysine.. Functionally, part of the nuclear inner membrane (INM)-specific branch of the ER-associated degradation (ERAD) pathway, required for the elimination of misfolded proteins in the INM, a specialized ER subdomain. Required for ERG11 degradation. Negative regulator of SPS-sensor signaling. Together with ASI2 and ASI3, prevents the unprocessed precursor forms of STP1 and STP2 that escape cytoplasmic anchoring from inducing SPS-sensor-regulated genes in the absence of inducing signals. Controls amino acid permease (AAP) gene expression in response to amino acid availability, a process mediated by the transcription factors STP1 and STP1. In Saccharomyces cerevisiae (strain ATCC 204508 / S288c) (Baker's yeast), this protein is Probable ERAD-associated E3 ubiquitin-protein ligase ASI1 (ASI3).